A 229-amino-acid chain; its full sequence is Endonuclease V (229 aa).

Belongs to the endonuclease V family.

The protein resides in the cytoplasm. The catalysed reaction is Endonucleolytic cleavage at apurinic or apyrimidinic sites to products with a 5'-phosphate.. Functionally, DNA repair enzyme involved in the repair of deaminated bases. Selectively cleaves double-stranded DNA at the second phosphodiester bond 3' to a deoxyinosine leaving behind the intact lesion on the nicked DNA. This is Endonuclease V from Methanopyrus kandleri (strain AV19 / DSM 6324 / JCM 9639 / NBRC 100938).